A 1351-amino-acid chain; its full sequence is DNA-directed RNA polymerase subunit beta' (1351 aa).

The Zn(2+) site is built by Cys70, Cys72, Cys85, and Cys88. Mg(2+) contacts are provided by Asp460, Asp462, and Asp464. Zn(2+) contacts are provided by Cys801, Cys875, Cys882, and Cys885.

This sequence belongs to the RNA polymerase beta' chain family. The RNAP catalytic core consists of 2 alpha, 1 beta, 1 beta' and 1 omega subunit. When a sigma factor is associated with the core the holoenzyme is formed, which can initiate transcription. Requires Mg(2+) as cofactor. Zn(2+) serves as cofactor.

It carries out the reaction RNA(n) + a ribonucleoside 5'-triphosphate = RNA(n+1) + diphosphate. Functionally, DNA-dependent RNA polymerase catalyzes the transcription of DNA into RNA using the four ribonucleoside triphosphates as substrates. The protein is DNA-directed RNA polymerase subunit beta' of Syntrophobacter fumaroxidans (strain DSM 10017 / MPOB).